Here is a 238-residue protein sequence, read N- to C-terminus: Small ribosomal subunit protein uS2c (238 aa).

It belongs to the universal ribosomal protein uS2 family.

Its subcellular location is the plastid. It localises to the chloroplast. This chain is Small ribosomal subunit protein uS2c (rps2), found in Jasminum nudiflorum (Winter jasmine).